The sequence spans 131 residues: Glycine cleavage system H protein (131 aa).

The Lipoyl-binding domain maps to 24 to 106 (RAIVGISDHA…YGEGWIMVIE (83 aa)). Lysine 65 bears the N6-lipoyllysine mark.

It belongs to the GcvH family. The glycine cleavage system is composed of four proteins: P, T, L and H. (R)-lipoate serves as cofactor.

Functionally, the glycine cleavage system catalyzes the degradation of glycine. The H protein shuttles the methylamine group of glycine from the P protein to the T protein. The polypeptide is Glycine cleavage system H protein (Xylella fastidiosa (strain M12)).